The primary structure comprises 509 residues: Histidine ammonia-lyase (509 aa).

The 5-imidazolinone (Ala-Gly) cross-link spans 142–144; that stretch reads ASG. Serine 143 carries the post-translational modification 2,3-didehydroalanine (Ser).

It belongs to the PAL/histidase family. In terms of processing, contains an active site 4-methylidene-imidazol-5-one (MIO), which is formed autocatalytically by cyclization and dehydration of residues Ala-Ser-Gly.

The protein localises to the cytoplasm. The enzyme catalyses L-histidine = trans-urocanate + NH4(+). The protein operates within amino-acid degradation; L-histidine degradation into L-glutamate; N-formimidoyl-L-glutamate from L-histidine: step 1/3. This is Histidine ammonia-lyase from Pseudomonas aeruginosa (strain UCBPP-PA14).